A 287-amino-acid polypeptide reads, in one-letter code: 2-dehydro-3-deoxyphosphooctonate aldolase (287 aa).

The protein belongs to the KdsA family.

The protein resides in the cytoplasm. The catalysed reaction is D-arabinose 5-phosphate + phosphoenolpyruvate + H2O = 3-deoxy-alpha-D-manno-2-octulosonate-8-phosphate + phosphate. It participates in carbohydrate biosynthesis; 3-deoxy-D-manno-octulosonate biosynthesis; 3-deoxy-D-manno-octulosonate from D-ribulose 5-phosphate: step 2/3. The protein operates within bacterial outer membrane biogenesis; lipopolysaccharide biosynthesis. The sequence is that of 2-dehydro-3-deoxyphosphooctonate aldolase from Nitrobacter hamburgensis (strain DSM 10229 / NCIMB 13809 / X14).